The following is a 311-amino-acid chain: Probable manganese-dependent inorganic pyrophosphatase (311 aa).

The Mn(2+) site is built by His-9, Asp-13, Asp-15, Asp-75, His-97, and Asp-149.

This sequence belongs to the PPase class C family. Mn(2+) serves as cofactor.

The protein localises to the cytoplasm. It catalyses the reaction diphosphate + H2O = 2 phosphate + H(+). The sequence is that of Probable manganese-dependent inorganic pyrophosphatase from Lactobacillus delbrueckii subsp. bulgaricus (strain ATCC BAA-365 / Lb-18).